The following is a 241-amino-acid chain: 1-(5-phosphoribosyl)-5-[(5-phosphoribosylamino)methylideneamino] imidazole-4-carboxamide isomerase (241 aa).

The active-site Proton acceptor is Asp10. Asp131 serves as the catalytic Proton donor.

This sequence belongs to the HisA/HisF family.

It is found in the cytoplasm. The enzyme catalyses 1-(5-phospho-beta-D-ribosyl)-5-[(5-phospho-beta-D-ribosylamino)methylideneamino]imidazole-4-carboxamide = 5-[(5-phospho-1-deoxy-D-ribulos-1-ylimino)methylamino]-1-(5-phospho-beta-D-ribosyl)imidazole-4-carboxamide. Its pathway is amino-acid biosynthesis; L-histidine biosynthesis; L-histidine from 5-phospho-alpha-D-ribose 1-diphosphate: step 4/9. In Bifidobacterium longum (strain NCC 2705), this protein is 1-(5-phosphoribosyl)-5-[(5-phosphoribosylamino)methylideneamino] imidazole-4-carboxamide isomerase.